A 1203-amino-acid polypeptide reads, in one-letter code: Partitioning defective 3 homolog B (1203 aa).

Disordered regions lie at residues 79-104 (FDEQ…PDAF) and 138-162 (RRSS…SGQS). Ser-100 carries the post-translational modification Phosphoserine. Residues 152–162 (QPSTASLSGQS) are compositionally biased toward polar residues. Residues 201–289 (TRAVEISGEG…SPSVILHVLL (89 aa)) form the PDZ 1 domain. Residues 334–374 (TRASSPEGEEPASPQQSKSPRVPRLGRKPSSPSLSPLMGFG) form a disordered region. Phosphoserine occurs at positions 346, 352, and 368. PDZ domains are found at residues 383–468 (KIDL…VIAR) and 496–585 (TLEI…GMIQ). Phosphoserine is present on residues Ser-635, Ser-710, Ser-728, Ser-730, Ser-746, Ser-749, and Ser-801. The segment covering 718–732 (GKVQSLADRRSDSPG) has biased composition (basic and acidic residues). The disordered stretch occupies residues 718–743 (GKVQSLADRRSDSPGKDFGPTLGLKK). 3 disordered regions span residues 787 to 927 (KSYD…EKQA), 968 to 994 (VFRS…PDHL), and 1050 to 1203 (RPSD…TAAV). A Phosphothreonine modification is found at Thr-810. Over residues 827–842 (VENKAKNIKKTKEKEK) the composition is skewed to basic and acidic residues. The span at 843–854 (KKGKGKLKVKEK) shows a compositional bias: basic residues. Composition is skewed to basic and acidic residues over residues 855–865 (KLKEEHEDAER), 881–893 (KKDD…EQKG), 906–927 (ERMK…EKQA), and 984–994 (RDGRPLSPDHL). Ser-1088 and Ser-1182 each carry phosphoserine.

The protein belongs to the PAR3 family. Interacts with PARD6B. Interacts with INSC/inscuteable.

The protein resides in the endomembrane system. Its subcellular location is the cell junction. It is found in the tight junction. Its function is as follows. Putative adapter protein involved in asymmetrical cell division and cell polarization processes. May play a role in the formation of epithelial tight junctions. This chain is Partitioning defective 3 homolog B (Pard3b), found in Mus musculus (Mouse).